Here is a 299-residue protein sequence, read N- to C-terminus: tRNA dimethylallyltransferase (299 aa).

13-20 (GPTASGKT) contributes to the ATP binding site. 15 to 20 (TASGKT) is a binding site for substrate. The tract at residues 38–41 (DSRQ) is interaction with substrate tRNA.

This sequence belongs to the IPP transferase family. Monomer. Mg(2+) is required as a cofactor.

The enzyme catalyses adenosine(37) in tRNA + dimethylallyl diphosphate = N(6)-dimethylallyladenosine(37) in tRNA + diphosphate. Functionally, catalyzes the transfer of a dimethylallyl group onto the adenine at position 37 in tRNAs that read codons beginning with uridine, leading to the formation of N6-(dimethylallyl)adenosine (i(6)A). This chain is tRNA dimethylallyltransferase, found in Synechococcus sp. (strain CC9605).